The following is a 92-amino-acid chain: MLYLVRMDVNLPHDMPAAQADDIKAREKAYAQQLQHEGKWQQLYRVVGEYANYSIFDVGSHDELHTLLSGLPLFPYMKIHVTPLAKHPSSIR.

It belongs to the muconolactone Delta-isomerase family. Homodecamer.

The enzyme catalyses (S)-muconolactone = (4,5-dihydro-5-oxofuran-2-yl)-acetate. It participates in aromatic compound metabolism; beta-ketoadipate pathway; 5-oxo-4,5-dihydro-2-furylacetate from catechol: step 3/3. The protein is Muconolactone Delta-isomerase (catC) of Cupriavidus pinatubonensis (strain JMP 134 / LMG 1197) (Cupriavidus necator (strain JMP 134)).